We begin with the raw amino-acid sequence, 100 residues long: Nucleoid-associated protein HPG27_32 (100 aa).

The protein belongs to the YbaB/EbfC family. As to quaternary structure, homodimer.

The protein resides in the cytoplasm. Its subcellular location is the nucleoid. In terms of biological role, binds to DNA and alters its conformation. May be involved in regulation of gene expression, nucleoid organization and DNA protection. This is Nucleoid-associated protein HPG27_32 from Helicobacter pylori (strain G27).